Here is a 205-residue protein sequence, read N- to C-terminus: Dephospho-CoA kinase (205 aa).

Residues 15-205 (VIGLTGGIAT…VERALDQASI (191 aa)) enclose the DPCK domain. Position 23–28 (23–28 (ATGKST)) interacts with ATP.

It belongs to the CoaE family.

Its subcellular location is the cytoplasm. The catalysed reaction is 3'-dephospho-CoA + ATP = ADP + CoA + H(+). The protein operates within cofactor biosynthesis; coenzyme A biosynthesis; CoA from (R)-pantothenate: step 5/5. In terms of biological role, catalyzes the phosphorylation of the 3'-hydroxyl group of dephosphocoenzyme A to form coenzyme A. The chain is Dephospho-CoA kinase from Gloeobacter violaceus (strain ATCC 29082 / PCC 7421).